The primary structure comprises 150 residues: MSKAVKILLVNGPNLNLLGRREPGHYGHHTLAQIVEQLKLLAGEQGASLDHIQSNAEHELIDAIHQSDADFIIINPAAFTHTSVALRDALLGVAIPFIEVHLSNVHAREAFRHHSYFSDKAVGVICGLGEQGYRYALDSAIARVRAAQEK.

The active-site Proton acceptor is Tyr-26. Asn-75, His-81, and Asp-88 together coordinate substrate. His-101 functions as the Proton donor in the catalytic mechanism. Substrate-binding positions include Leu-102–Ser-103 and Arg-112.

Belongs to the type-II 3-dehydroquinase family. In terms of assembly, homododecamer.

The enzyme catalyses 3-dehydroquinate = 3-dehydroshikimate + H2O. It participates in metabolic intermediate biosynthesis; chorismate biosynthesis; chorismate from D-erythrose 4-phosphate and phosphoenolpyruvate: step 3/7. Its function is as follows. Catalyzes a trans-dehydration via an enolate intermediate. This chain is 3-dehydroquinate dehydratase, found in Shewanella loihica (strain ATCC BAA-1088 / PV-4).